The following is a 1755-amino-acid chain: Periplakin (1755 aa).

Residues 1–11 (MHSLFRKRNKG) are compositionally biased toward basic residues. Residues 1-20 (MHSLFRKRNKGKYSPTVQTR) form a disordered region. The residue at position 14 (Ser-14) is a Phosphoserine. Coiled-coil stretches lie at residues 16–125 (TVQT…KQMY) and 182–387 (LAKD…QQVV). Spectrin repeat units lie at residues 214–315 (QDYM…SHLK), 321–483 (HQFH…HALQ), and 503–610 (RQLL…EKVD). An SH3 domain is found at 397–453 (LKPIPVEALCDFESDQGLISRGYSYTLQKNNGESWELTDSTGKKLAAPAVCFIIPPT). Ser-463 is subject to Phosphoserine. Coiled coils occupy residues 611–819 (VANR…RNSH) and 883–1644 (LSSG…SVAV). 4 positions are modified to phosphoserine: Ser-885, Ser-947, Ser-1583, and Ser-1656. The segment at 1556–1755 (ELDFLREENH…ELAVLVSGQK (200 aa)) is interacts with BFSP2 and VIM. Plectin repeat units lie at residues 1650–1684 (ENHLRRSIVVIDPDTGRELSPEEAHRAGLIDWKMF) and 1699–1734 (VKGPNGESSVIHDRKSGKKFSIEDALQSGRLTAAQY).

Belongs to the plakin or cytolinker family. Homodimer or a heterodimer with EVPL. Found in a complex composed of PPL (via C-terminal linker domain), BFSP1 and BFSP2 in the retinal lens. Within the complex interacts (via C-terminal linker domain) with BFSP2. Interacts with VIM. Binds to the PH domain of AKT1. Interacts with FCGR1A. May interact with PPHLN1. In terms of tissue distribution, expressed in the retinal lens (at protein level).

Its subcellular location is the cell junction. It localises to the desmosome. The protein resides in the cytoplasm. The protein localises to the cytoskeleton. It is found in the cell membrane. Functionally, component of the cornified envelope of keratinocytes. May link the cornified envelope to desmosomes and intermediate filaments. May act as a localization signal in PKB/AKT-mediated signaling. The protein is Periplakin (Ppl) of Mus musculus (Mouse).